Reading from the N-terminus, the 1252-residue chain is Calmodulin-regulated spectrin-associated protein 3 (1252 aa).

Disordered regions lie at residues 183–205 (KTEQ…SPAQ), 331–385 (HAVS…SMSH), 429–457 (SVSS…ESGD), 479–604 (GAAD…MSEL), 638–697 (FLQV…LGDY), 712–935 (QRDM…EAAR), 962–981 (TTRA…GDFT), 996–1030 (DLDK…DDSA), and 1063–1114 (PNNL…TGPR). At threonine 184 the chain carries Phosphothreonine. Serine 193 is subject to Phosphoserine. The Calponin-homology (CH) domain occupies 203–312 (PAQPSIRYRK…LVVLLAEMYM (110 aa)). Residues serine 334, serine 347, serine 351, serine 368, serine 373, and serine 382 each carry the phosphoserine modification. Residues 335–353 (PRNTETVPSQNNSGSSSPV) are compositionally biased toward polar residues. The segment covering 359 to 373 (PLLSPGGPQSPLRGS) has biased composition (low complexity). Polar residues-rich tracts occupy residues 374-383 (TGSLKSSPSM), 441-450 (VSTSSRNSAQ), and 525-534 (ENPSKSSPCS). Phosphoserine is present on residues serine 548, serine 555, and serine 561. Over residues 569–580 (AERKKQLVKAEA) the composition is skewed to basic and acidic residues. Positions 595–629 (EALSSEMSELGARLEEKRRAIEAQKRRIEAIFAKH) form a coiled coil. Residue serine 683 is modified to Phosphoserine. The stretch at 696–727 (DYNRAVSKLSAALSSLQRDMQRLTDQQQRLLA) forms a coiled coil. The segment covering 729-739 (PEAPGPAPPPA) has biased composition (pro residues). Residues 740–768 (AWVIPGPATGPKAASPSPARRAPAARRSP) show a composition bias toward low complexity. Residue serine 767 is modified to Phosphoserine. Threonine 797 is subject to Phosphothreonine. A phosphoserine mark is found at serine 812 and serine 881. Polar residues predominate over residues 812 to 825 (SPSQVPVQTRSSIL). The segment covering 887 to 934 (YKDEDKPEDEMAQKRASLLERQQRRVEEARRRKQWQEAEKEQKREEAA) has biased composition (basic and acidic residues). The stretch at 896-943 (EMAQKRASLLERQQRRVEEARRRKQWQEAEKEQKREEAARLAQEAPGL) forms a coiled coil. Residue serine 1077 is modified to Phosphoserine. One can recognise a CKK domain in the interval 1112–1246 (GPRLYKEPSA…QSKKPTTPKK (135 aa)).

It belongs to the CAMSAP1 family. Interacts with PLEKHA7. Interacts with CAMSAP2. Interacts with KATNA1 and KATNB1; leading to regulate the length of CAMSAP3-decorated microtubule stretches. Interacts with AKAP9; regulating Golgi assembly in epithelial cells. Interacts with MACF1. Interacts with isoform C of CDH23; leading to inhibit CAMSAP3 ability to induce microtubule bundle formation. Interacts with AKNA. As to expression, expressed at the apical surface of respiratory epithelia, as well as in the acini of submucosal glands (at protein level). In cochlea, restricted to the organ of Corti and increases during development (at protein level). Highly expressed in both sensory hair cells and supporting cells.

The protein localises to the cytoplasm. Its subcellular location is the cytoskeleton. It is found in the cell junction. The protein resides in the adherens junction. It localises to the cilium axoneme. The protein localises to the cilium basal body. In terms of biological role, key microtubule-organizing protein that specifically binds the minus-end of non-centrosomal microtubules and regulates their dynamics and organization. Specifically recognizes growing microtubule minus-ends and autonomously decorates and stabilizes microtubule lattice formed by microtubule minus-end polymerization. Acts on free microtubule minus-ends that are not capped by microtubule-nucleating proteins or other factors and protects microtubule minus-ends from depolymerization. In addition, it also reduces the velocity of microtubule polymerization. Required for the biogenesis and the maintenance of zonula adherens by anchoring the minus-end of microtubules to zonula adherens and by recruiting the kinesin KIFC3 to those junctional sites. Required for orienting the apical-to-basal polarity of microtubules in epithelial cells: acts by tethering non-centrosomal microtubules to the apical cortex, leading to their longitudinal orientation. Plays a key role in early embryos, which lack centrosomes: accumulates at the microtubule bridges that connect pairs of cells and enables the formation of a non-centrosomal microtubule-organizing center that directs intracellular transport in the early embryo. Couples non-centrosomal microtubules with actin: interaction with MACF1 at the minus ends of non-centrosomal microtubules, tethers the microtubules to actin filaments, regulating focal adhesion size and cell migration. Plays a key role in the generation of non-centrosomal microtubules by accumulating in the pericentrosomal region and cooperating with KATNA1 to release non-centrosomal microtubules from the centrosome. Through the microtubule cytoskeleton, also regulates the organization of cellular organelles including the Golgi and the early endosomes. Through interaction with AKAP9, involved in translocation of Golgi vesicles in epithelial cells, where microtubules are mainly non-centrosomal. Plays an important role in motile cilia function by facilitatating proper orientation of basal bodies and formation of central microtubule pairs in motile cilia. In Mus musculus (Mouse), this protein is Calmodulin-regulated spectrin-associated protein 3.